A 421-amino-acid polypeptide reads, in one-letter code: NADP(+)-dependent glutamate dehydrogenase (421 aa).

Residues K70 and K94 each contribute to the substrate site. The active-site Proton donor is the K106. NADP(+)-binding residues include T190 and N221. S354 serves as a coordination point for substrate.

This sequence belongs to the Glu/Leu/Phe/Val dehydrogenases family. Homohexamer.

The enzyme catalyses L-glutamate + NADP(+) + H2O = 2-oxoglutarate + NH4(+) + NADPH + H(+). With respect to regulation, is not regulated allosterically. Activity is inhibited in the presence of high ionic strength; the inhibitory effect of KCl is slightly higher than that of NaCl. In terms of biological role, catalyzes the reversible oxidative deamination of L-glutamate to 2-oxoglutarate and ammonia, thereby playing a key role at the intersection of the carbon and nitrogen metabolic pathways. Shows a high preference for NADP(+)/NADPH as the acceptor/donor over NAD(+)/NADH. May function in vivo in the synthetic direction. Also catalyzes at very low rates the oxidative deamination of L-2-aminobutyrate, and the reductive amination of 2-oxovalerate and 2-oxobutyrate. This chain is NADP(+)-dependent glutamate dehydrogenase, found in Pyrobaculum calidifontis (strain DSM 21063 / JCM 11548 / VA1).